A 187-amino-acid polypeptide reads, in one-letter code: Elongation factor P (187 aa).

The protein belongs to the elongation factor P family.

The protein resides in the cytoplasm. It participates in protein biosynthesis; polypeptide chain elongation. Involved in peptide bond synthesis. Stimulates efficient translation and peptide-bond synthesis on native or reconstituted 70S ribosomes in vitro. Probably functions indirectly by altering the affinity of the ribosome for aminoacyl-tRNA, thus increasing their reactivity as acceptors for peptidyl transferase. This Prochlorococcus marinus (strain NATL1A) protein is Elongation factor P.